The chain runs to 332 residues: Ribose operon repressor (332 aa).

Residues 2–56 (ATMKDIARLAQVSTSTVSHVINGSRFVSDEIREKVMRIVAELNYTPSAVARSLKV) enclose the HTH lacI-type domain. The segment at residues 4-23 (MKDIARLAQVSTSTVSHVIN) is a DNA-binding region (H-T-H motif).

In terms of biological role, transcriptional repressor for the ribose rbsDACBK operon. This chain is Ribose operon repressor (rbsR), found in Haemophilus influenzae (strain ATCC 51907 / DSM 11121 / KW20 / Rd).